Here is a 167-residue protein sequence, read N- to C-terminus: UPF0114 protein in repA1-repA2 intergenic region (167 aa).

A run of 3 helical transmembrane segments spans residues 15–35 (LMFP…LKFF), 53–73 (LVLA…LVMV), and 136–156 (IMLC…MAYI).

The protein belongs to the UPF0114 family.

Its subcellular location is the cell membrane. The protein is UPF0114 protein in repA1-repA2 intergenic region of Buchnera aphidicola subsp. Schizaphis graminum (strain Sg).